A 432-amino-acid chain; its full sequence is Succinate--CoA ligase [GDP-forming] subunit beta, mitochondrial (432 aa).

A mitochondrion-targeting transit peptide spans 1 to 37; that stretch reads MASPVAAQAGKLLRALALRPRFLAAGSQAVQLTSRRW. The region spanning 46–274 is the ATP-grasp domain; the sequence is KKLMSDNGVR…NAEFRQKDIF (229 aa). Position 57 (Gln57) interacts with GTP. Residue Lys73 is modified to N6-acetyllysine. At Lys78 the chain carries N6-succinyllysine. 90–92 lines the GTP pocket; the sequence is GRG. Residues Lys132 and Lys139 each carry the N6-acetyllysine modification. Leu146 is a binding site for GTP. Ser161 carries the post-translational modification Phosphoserine. Residues Lys200, Lys218, and Lys227 each carry the N6-acetyllysine modification. Asn243 and Asp257 together coordinate Mg(2+). N6-acetyllysine occurs at positions 271 and 291. Substrate is bound at residue Asn308. Lys338 bears the N6-succinyllysine mark. At Lys347 the chain carries N6-acetyllysine. 365 to 367 lines the substrate pocket; sequence GIV. 2 positions are modified to N6-acetyllysine: Lys386 and Lys423.

The protein belongs to the succinate/malate CoA ligase beta subunit family. GTP-specific subunit beta subfamily. As to quaternary structure, heterodimer of an alpha and a beta subunit. The beta subunit determines specificity for GTP. Mg(2+) serves as cofactor. As to expression, mainly expressed in liver, kidney, heart, spleen and skeletal muscle. Also found in intestine and colon, and in low amounts in lung, brain, prostate, testis and ovary.

Its subcellular location is the mitochondrion. It catalyses the reaction GTP + succinate + CoA = succinyl-CoA + GDP + phosphate. The protein operates within carbohydrate metabolism; tricarboxylic acid cycle; succinate from succinyl-CoA (ligase route): step 1/1. Its function is as follows. GTP-specific succinyl-CoA synthetase functions in the citric acid cycle (TCA), coupling the hydrolysis of succinyl-CoA to the synthesis of GTP and thus represents the only step of substrate-level phosphorylation in the TCA. The beta subunit provides nucleotide specificity of the enzyme and binds the substrate succinate, while the binding sites for coenzyme A and phosphate are found in the alpha subunit. This Homo sapiens (Human) protein is Succinate--CoA ligase [GDP-forming] subunit beta, mitochondrial.